A 135-amino-acid polypeptide reads, in one-letter code: MAPKAAEKKPVEKTPAVKKPKAEKKVPTSKEGGEKKGKKKSKKSMETYKIYIFKVLKQVHPDIGISSKAMSITNSFINDIFEKLAGESAKLARYNKKPTITSREIQTSVRLVLPGELAKHAVSEGTKAVTKFTSA.

Composition is skewed to basic and acidic residues over residues M1–E12 and E23–K35. Residues M1–K43 form a disordered region. Residues K8 and K24 each carry the N6-acetyllysine modification. Residue K131 forms a Glycyl lysine isopeptide (Lys-Gly) (interchain with G-Cter in ubiquitin) linkage.

The protein belongs to the histone H2B family. As to quaternary structure, the nucleosome is a histone octamer containing two molecules each of H2A, H2B, H3 and H4 assembled in one H3-H4 heterotetramer and two H2A-H2B heterodimers. The octamer wraps approximately 147 bp of DNA. In terms of processing, can be acetylated to form H2BK6ac and H2BK33ac. Post-translationally, monoubiquitinated to form H2BK143ub1; may give a specific tag for epigenetic transcriptional activation. Expressed preferentially in meristematic tissues.

The protein resides in the nucleus. Its subcellular location is the chromosome. Its function is as follows. Core component of nucleosome. Nucleosomes wrap and compact DNA into chromatin, limiting DNA accessibility to the cellular machineries which require DNA as a template. Histones thereby play a central role in transcription regulation, DNA repair, DNA replication and chromosomal stability. DNA accessibility is regulated via a complex set of post-translational modifications of histones, also called histone code, and nucleosome remodeling. In Triticum aestivum (Wheat), this protein is Histone H2B.4 (TH153).